Consider the following 160-residue polypeptide: Phosphopantetheine adenylyltransferase (160 aa).

Ser-10 is a binding site for substrate. Residues 10-11 (SF) and His-18 each bind ATP. Substrate contacts are provided by Lys-42, Thr-74, and Arg-88. Residues 89–91 (GLR), Glu-99, and 124–130 (YSFISST) each bind ATP.

This sequence belongs to the bacterial CoaD family. Homohexamer. Mg(2+) is required as a cofactor.

The protein resides in the cytoplasm. It catalyses the reaction (R)-4'-phosphopantetheine + ATP + H(+) = 3'-dephospho-CoA + diphosphate. Its pathway is cofactor biosynthesis; coenzyme A biosynthesis; CoA from (R)-pantothenate: step 4/5. Functionally, reversibly transfers an adenylyl group from ATP to 4'-phosphopantetheine, yielding dephospho-CoA (dPCoA) and pyrophosphate. The protein is Phosphopantetheine adenylyltransferase of Leptospira interrogans serogroup Icterohaemorrhagiae serovar copenhageni (strain Fiocruz L1-130).